The primary structure comprises 1503 residues: Transient receptor potential cation channel subfamily M member 2 (1503 aa).

The segment at 1 to 20 is disordered; that stretch reads MEPSALRKAGSEQEEGFEGL. Residues 1–752 lie on the Cytoplasmic side of the membrane; sequence MEPSALRKAG…WWGQLSVDNG (752 aa). ADP-D-ribose is bound by residues T174, N179, R302, G333, and T336. At T740 the chain carries Phosphothreonine. An intramembrane segment occupies 753–769; it reads LWRVTLCMLAFPLLLTG. At 770-795 the chain is on the cytoplasmic side; it reads LISFREKRLQDVGTPAARARAFFTAP. The helical transmembrane segment at 796–816 threads the bilayer; sequence VVVFHLNILSYFAFLCLFAYV. Topologically, residues 817-827 are extracellular; sequence LMVDFQPVPSW. The chain crosses the membrane as a helical span at residues 828–848; sequence CECAIYLWLFSLVCEEMRQLF. E843 and Q846 together coordinate Ca(2+). The Cytoplasmic portion of the chain corresponds to 849–867; the sequence is YDPDECGLMKKAALYFSDF. The chain crosses the membrane as a helical span at residues 868 to 888; that stretch reads WNKLDVGAILLFVAGLTCRLI. N869 provides a ligand contact to Ca(2+). Over 889 to 896 the chain is Extracellular; it reads PATLYPGR. A helical membrane pass occupies residues 897-917; sequence VILSLDFILFCLRLMHIFTIS. At 918–929 the chain is on the cytoplasmic side; sequence KTLGPKIIIVKR. The chain crosses the membrane as a helical span at residues 930–950; sequence MMKDVFFFLFLLAVWVVSFGV. The Extracellular portion of the chain corresponds to 951–970; sequence AKQAILIHNERRVDWLFRGA. Positions 971–985 form an intramembrane region, pore-forming; the sequence is VYHSYLTIFGQIPGY. The Selectivity filter motif lies at 979–982; sequence FGQI. Residues 986-1022 are Extracellular-facing; that stretch reads IDGVNFNPEHCSPNGTDPYKPKCPESDATQQRPAFPE. An intrachain disulfide couples C996 to C1008. The chain crosses the membrane as a helical span at residues 1023–1044; that stretch reads WLTVLLLCLYLLFTNILLLNLL. The Cytoplasmic portion of the chain corresponds to 1045–1079; that stretch reads IAMFNYTFQQVQEHTDQIWKFQRHDLIEEYHGRPA. Residue E1073 coordinates Ca(2+). Residues 1080-1098 lie within the membrane without spanning it; the sequence is APPPFILLSHLQLFIKRVV. The Cytoplasmic segment spans residues 1099-1503; that stretch reads LKTPAKRHKQ…KAAAEFGAHY (405 aa). Residues 1206-1237 are disordered; the sequence is EADVPTLASQKAAEEPDAEPGGRKKTEEPGDS. The Nudix hydrolase domain maps to 1354 to 1498; that stretch reads RWRRNEDGAI…KTLLQKAAAE (145 aa). 2 residues coordinate ADP-D-ribose: L1381 and S1382. The short motif at 1390–1411 is the Nudix box element; it reads GSREPGEMLPRKLKRILRQEHW. The ADP-D-ribose site is built by D1431, R1433, Y1485, and N1487.

Belongs to the transient receptor (TC 1.A.4) family. LTrpC subfamily. TRPM2 sub-subfamily. Homotetramer. Isoform 1 can interact with isoform 3. This interaction decreases Ca(2+) influx through isoform 1 and suppresses susceptibility to oxidative stress-induced cell death. Phosphorylation of TRPM2 at Thr-740 by protein kinase C (PKC) counteracts the effect of cytosolic Ca(2+) and elevates the temperature threshold. In terms of tissue distribution, highly expressed in brain and peripheral blood cells, such as neutrophils. Also detected in bone marrow, spleen, heart, liver and lung. Isoform 2 is found in neutrophil granulocytes.

Its subcellular location is the cell membrane. The protein localises to the perikaryon. It is found in the cell projection. It localises to the cytoplasmic vesicle. The protein resides in the lysosome. The catalysed reaction is Ca(2+)(in) = Ca(2+)(out). It catalyses the reaction Na(+)(in) = Na(+)(out). Its activity is regulated as follows. Activated by intracellular ADP-ribose, beta-NAD (NAD(+)) and similar compounds, and by oxidative stress caused by reactive oxygen or nitrogen species. Ca(2+) and PI(4,5)P2 are required for channel opening by ADP-ribose. Activation by ADP-ribose and beta-NAD is strongly increased by moderate heat (35 to 40 degrees Celsius). Likewise, reactive oxygen species lower the threshold for activation by moderate heat (37 degrees Celsius). Activated by moderate heat (35 to 40 degrees Celsius). Inactivated by exposure to extracellular pH between 4.0 and 6.5; irreversibly inactivated when open channels are exposed to extracellular pH between 4.0 and 6.5, while pre-exposure of closed channels to extracellular pH 5.5 gives rise to currents that rapidly inactivate, but protects against irreversible inactivation. Inactivated by intracellular ATP. Activated by arachidonic acid. Inhibited by 2-aminoethyl diphenylborinate (2-APB). In terms of biological role, nonselective, voltage-independent cation channel that mediates Na(+) and Ca(2+) influx, leading to increased cytoplasmic Ca(2+) levels. Functions as a ligand-gated ion channel, gated by intracellular adenosine diphosphate ribose (ADP-ribose), Ca(2+), warm temperature, and oxidative stress. The precise physiological activators are under debate; the true, physiological activators may be ADP-ribose and ADP-ribose-2'-phosphate. Binding of ADP-ribose to the cytoplasmic Nudix domain causes a conformation change; the channel is primed but still requires Ca(2+) binding to trigger channel opening. Extracellular Ca(2+) passes through the channel and increases channel activity. Contributes to Ca(2+) release from intracellular stores in response to ADP-ribose. Plays a role in numerous processes that involve signaling via intracellular Ca(2+) levels. Besides, mediates the release of lysosomal Zn(2+) stores in response to reactive oxygen species, leading to increased cytosolic Zn(2+) levels. Plays a role in mediating behavorial and physiological responses to moderate heat and thereby contributes to body temperature homeostasis. Plays a role in insulin secretion, a process that requires increased cytoplasmic Ca(2+) levels. Required for normal IFNG and cytokine secretion and normal innate immune immunity in response to bacterial infection. Required for normal phagocytosis and cytokine release by macrophages exposed to zymosan (in vitro). Plays a role in dendritic cell differentiation and maturation, and in dendritic cell chemotaxis via its role in regulating cytoplasmic Ca(2+) levels. Plays a role in the regulation of the reorganization of the actin cytoskeleton and filopodia formation in response to reactive oxygen species via its role in increasing cytoplasmic Ca(2+) and Zn(2+) levels. Confers susceptibility to cell death following oxidative stress. Its function is as follows. Lacks cation channel activity. Does not mediate cation transport in response to oxidative stress or ADP-ribose. Functionally, lacks cation channel activity and negatively regulates the channel activity of isoform 1. Negatively regulates susceptibility to cell death in reposponse to oxidative stress. The protein is Transient receptor potential cation channel subfamily M member 2 (TRPM2) of Homo sapiens (Human).